Reading from the N-terminus, the 209-residue chain is Mediator of RNA polymerase II transcription subunit 20 (209 aa).

It belongs to the Mediator complex subunit 20 family. Component of the Mediator complex.

It localises to the nucleus. In terms of biological role, component of the Mediator complex, a coactivator involved in the regulated transcription of nearly all RNA polymerase II-dependent genes. Mediator functions as a bridge to convey information from gene-specific regulatory proteins to the basal RNA polymerase II transcription machinery. Mediator is recruited to promoters by direct interactions with regulatory proteins and serves as a scaffold for the assembly of a functional preinitiation complex with RNA polymerase II and the general transcription factors. The protein is Mediator of RNA polymerase II transcription subunit 20 (SRB2) of Eremothecium gossypii (strain ATCC 10895 / CBS 109.51 / FGSC 9923 / NRRL Y-1056) (Yeast).